We begin with the raw amino-acid sequence, 457 residues long: G-protein coupled receptor 135 (457 aa).

The tract at residues 1–26 (MEEQARPPGRPAASATLQGSAHPGGA) is disordered. The Extracellular portion of the chain corresponds to 1–64 (MEEQARPPGR…EAAGSRGPAP (64 aa)). N-linked (GlcNAc...) asparagine glycosylation occurs at asparagine 47. The chain crosses the membrane as a helical span at residues 65–85 (LLWHGAAVAAQALVLLLIFLL). At 86–109 (SSLGNCAVMGVIVKHRQLRTVTNA) the chain is on the cytoplasmic side. Residues 110 to 130 (FILSLSLSDLLTALLCLPAAF) form a helical membrane-spanning segment. The Extracellular portion of the chain corresponds to 131 to 156 (LDLFAPPGDSGPWRSFCAASRFFSSC). A helical transmembrane segment spans residues 157-177 (FGIVSTFSVALISLDRYCAIV). At 178-189 (RPPRDKLGRRRA) the chain is on the cytoplasmic side. Residues 190-210 (LQLLAGAWLAALGFSLPWDLL) form a helical membrane-spanning segment. Topologically, residues 211-235 (RAPREPPAPQSFHRCLYRTSPDPAQ) are extracellular. Residues 236 to 256 (LGVAYSVGLVVACYLLPFLLM) form a helical membrane-spanning segment. At 257 to 295 (CFCRYHICKTVRLSDVRVRPMTTYARVLRFFSEVRTATT) the chain is on the cytoplasmic side. Residues 296–316 (VLIMIIFVMCCWGPYCFLVLL) form a helical membrane-spanning segment. Residues 317 to 329 (AATRQGQATQAPS) are Extracellular-facing. The chain crosses the membrane as a helical span at residues 330–350 (LLNVAAVWLTWANGAINPVIY). Residues 351-457 (AIRNPNISML…HNSETRDSSI (107 aa)) lie on the Cytoplasmic side of the membrane.

It belongs to the G-protein coupled receptor 1 family. As to quaternary structure, interacts with MTNR1B. Interacts with ARRB1 and ARRB2 in a spontaneous and agonist-independent manner; leading to the internalization of GPR135 in the endosomal compartment.

It localises to the cell membrane. The protein resides in the endosome membrane. Its function is as follows. Orphan receptor. Has spontaneous activity for beta-arrestin recruitment. Shows a reciprocal regulatory interaction with the melatonin receptor MTNR1B most likely through receptor heteromerization. This is G-protein coupled receptor 135 (Gpr135) from Mus musculus (Mouse).